The primary structure comprises 478 residues: GDP-fucose protein O-fucosyltransferase 3 (478 aa).

Residues 1–8 are Cytoplasmic-facing; the sequence is MVWIQRRR. A helical; Signal-anchor for type II membrane protein membrane pass occupies residues 9 to 31; the sequence is LLASCLCITATVFLLVTLQVVVE. At 32–478 the chain is on the lumenal side; it reads LGKFERKKFK…QEFWALVFKD (447 aa). N110 and N168 each carry an N-linked (GlcNAc...) asparagine glycan. A disulfide bond links C389 and C392.

This sequence belongs to the glycosyltransferase 10 family.

The protein resides in the endoplasmic reticulum membrane. It catalyses the reaction L-threonyl-[protein] + GDP-beta-L-fucose = 3-O-(alpha-L-fucosyl)-L-threonyl-[protein] + GDP + H(+). The catalysed reaction is L-seryl-[protein] + GDP-beta-L-fucose = 3-O-(alpha-L-fucosyl)-L-seryl-[protein] + GDP + H(+). The protein operates within protein modification; protein glycosylation. Protein O-fucosyltransferase that specifically catalyzes O-fucosylation of serine or threonine residues in EMI domains of target proteins, such as MMRN1, MMRN2 and EMID1. Attaches fucose through an O-glycosidic linkage. O-fucosylation of EMI domain-containing proteins may be required for facilitating protein folding and secretion. May also show alpha-(1,3)-fucosyltransferase activity toward the innermost N-acetyl glucosamine (GlcNAc) residue in biantennary N-glycan acceptors. However, this was tested with a library of synthetic substrates and this activity is unsure in vivo. May be involved in biosynthesis of Lewis X-carrying biantennary N-glycans that regulate neuron stem cell self-renewal during brain development. This is GDP-fucose protein O-fucosyltransferase 3 (FUT10) from Canis lupus familiaris (Dog).